The sequence spans 771 residues: MQSAKPLFDYPKYWAECFGPAPFLPMSREEMDLLGWDSCDIIIVTGDAYVDHPSFGMAIIGRLLESQGFRVGIIAQPNWQSKDDFMKLGEPNLFFGVAAGNMDSMINRYTADKKIRSDDAYTPGGMAGKRPDRASLVYSQRCKEAYKHVPIVLGGIEASLRRIAHYDYWQDKVRNSILIDACADILLYGNAERAIVEVAQRLSYGHKIEDITDVRGTAFIRRDTPQGWYEVDSTRIDRPGKVDKIINPYVNTQDTQACAIEQEKGNVEDPNEAKVVQILASPRMTRDKTVIRLPSVEKVRNDAVLYAHANRVLHLETNPGNARALVQKHGEVDVWFNPPPIPMTTDEMDYVFGMPYARVPHPAYGKEKIPAYDMIRFSVNIMRGCFGGCTFCSITEHEGRIIQNRSEESIIREIEEIRDKVPGFTGVISDLGGPTANMYRIACKSPEIESACRKPSCVFPGICPNLNTDHSSLIQLYRSARALPGVKKILIASGLRYDLAVESPEYVKELVTHHVGGYLKIAPEHTEEGPLNQMMKPGIGSYDKFKRMFEKYTKEAGKEQYLIPYFIAAHPGTTDEDMMNLALWLKGNGFRADQVQAFYPSPMATATAMYHSGKNPLRKVTYKSDAVTIVKSEEQRRLHKAFLRYHDPKGWPMLRAALERMGRADLIGPGKDQLIPLHQPATDTYQSARRKNSTPAGSHKVGKDPKTTLIQTQHTGLPPRGSDGSKPWDKREEAKAAAMARNKQAAKERMDAAKGGKGKGGKPARKPVVPR.

The Radical SAM core domain maps to 371 to 649 (AYDMIRFSVN…KAFLRYHDPK (279 aa)). Cysteine 385, cysteine 389, and cysteine 392 together coordinate [4Fe-4S] cluster. A disordered region spans residues 683-771 (DTYQSARRKN…KPARKPVVPR (89 aa)). Composition is skewed to basic and acidic residues over residues 726–735 (KPWDKREEAK) and 745–754 (AAKERMDAAK). The span at 756–765 (GKGKGGKPAR) shows a compositional bias: basic residues.

This sequence belongs to the UPF0313 family. [4Fe-4S] cluster is required as a cofactor.

The sequence is that of UPF0313 protein PSPTO_4928 from Pseudomonas syringae pv. tomato (strain ATCC BAA-871 / DC3000).